The chain runs to 400 residues: tRNA-specific adenosine deaminase 1 (400 aa).

The A to I editase domain maps to 76–400 (SIATGVKALP…WIPTRTDDVK (325 aa)). His-101 lines the Zn(2+) pocket. Glu-103 (proton donor) is an active-site residue. Arg-108 is a binding site for 1D-myo-inositol hexakisphosphate. 2 residues coordinate Zn(2+): Cys-157 and Cys-223. The 1D-myo-inositol hexakisphosphate site is built by Lys-226, Arg-232, Lys-369, and Arg-375.

This sequence belongs to the ADAT1 family. Requires 1D-myo-inositol hexakisphosphate as cofactor. Zn(2+) serves as cofactor.

It catalyses the reaction adenosine(37) in tRNA(Ala) + H2O + H(+) = inosine(37) in tRNA(Ala) + NH4(+). Functionally, deaminates adenosine-37 to inosine in tRNA-Ala. The protein is tRNA-specific adenosine deaminase 1 (TAD1) of Saccharomyces cerevisiae (strain ATCC 204508 / S288c) (Baker's yeast).